A 181-amino-acid chain; its full sequence is Protein GrpE (181 aa).

A disordered region spans residues 1 to 21 (MNKEQQDLQTEQEAAVETAEL). Positions 8–21 (LQTEQEAAVETAEL) are enriched in low complexity.

The protein belongs to the GrpE family. As to quaternary structure, homodimer.

The protein localises to the cytoplasm. Functionally, participates actively in the response to hyperosmotic and heat shock by preventing the aggregation of stress-denatured proteins, in association with DnaK and GrpE. It is the nucleotide exchange factor for DnaK and may function as a thermosensor. Unfolded proteins bind initially to DnaJ; upon interaction with the DnaJ-bound protein, DnaK hydrolyzes its bound ATP, resulting in the formation of a stable complex. GrpE releases ADP from DnaK; ATP binding to DnaK triggers the release of the substrate protein, thus completing the reaction cycle. Several rounds of ATP-dependent interactions between DnaJ, DnaK and GrpE are required for fully efficient folding. The polypeptide is Protein GrpE (Trichlorobacter lovleyi (strain ATCC BAA-1151 / DSM 17278 / SZ) (Geobacter lovleyi)).